A 354-amino-acid polypeptide reads, in one-letter code: Annexin A13 (354 aa).

Annexin repeat units follow at residues 26 to 97, 98 to 177, 203 to 275, and 279 to 350; these read NDPN…MLLT, DTDK…ALLQ, NLVE…LTLN, and NRPK…ALIG. Ca(2+) is bound by residues Met-39, Gly-41, Gly-43, Thr-44, Glu-46, Glu-83, Met-111, Gly-113, Gly-115, Glu-118, Asp-163, Asp-265, Met-292, Gly-294, Leu-295, Gly-296, and Glu-336.

This sequence belongs to the annexin family. In terms of assembly, homodimer.

The protein localises to the tegument. Its subcellular location is the secreted. It localises to the extracellular exosome. It is found in the host cell. Involved in reproduction of the worm. Involved in host-parasite interaction. Delivered into the host cell by means of parasite exosomes. Binds to acidic phospholipid membranes in a calcium-dependent manner in vitro. Causes aggregation of liposomes in the presence of calcium, but not in its absence. Likely to promote membrane fusion. May provide structural integrity within the tegument. This chain is Annexin A13, found in Schistosoma japonicum (Blood fluke).